The chain runs to 178 residues: Probable chorismate pyruvate-lyase (178 aa).

Substrate-binding residues include R73, L111, and E163.

It belongs to the UbiC family.

It is found in the cytoplasm. It catalyses the reaction chorismate = 4-hydroxybenzoate + pyruvate. Its pathway is cofactor biosynthesis; ubiquinone biosynthesis. Removes the pyruvyl group from chorismate, with concomitant aromatization of the ring, to provide 4-hydroxybenzoate (4HB) for the ubiquinone pathway. The protein is Probable chorismate pyruvate-lyase of Pseudomonas aeruginosa (strain ATCC 15692 / DSM 22644 / CIP 104116 / JCM 14847 / LMG 12228 / 1C / PRS 101 / PAO1).